Here is a 697-residue protein sequence, read N- to C-terminus: Putative flagellar export/assembly protein LfhA (697 aa).

The next 7 helical transmembrane spans lie at 19–39 (VPLV…PALL), 40–60 (DILF…AVSA), 66–86 (FSLF…LNVA), 116–136 (GNFV…FIVV), 204–224 (AIAG…IGIF), 242–262 (IGDG…AAII), and 280–302 (LLAS…VVPG).

Belongs to the FHIPEP (flagella/HR/invasion proteins export pore) family.

Its subcellular location is the cell inner membrane. Part of the flagellar gene cluster Flag-2. However, the Flag-2 flagellar system could be inactive in strain 042 due to a frameshift in lfgC. The polypeptide is Putative flagellar export/assembly protein LfhA (Escherichia coli O44:H18 (strain 042 / EAEC)).